The chain runs to 334 residues: Thioredoxin reductase (334 aa).

Residues 10 to 13 (SGPA), 39 to 40 (IA), Gln44, Asn53, Val86, Cys143, Asp287, and 294 to 296 (RQA) contribute to the FAD site. A disulfide bond links Cys140 and Cys143.

The protein belongs to the class-II pyridine nucleotide-disulfide oxidoreductase family. In terms of assembly, homodimer. FAD serves as cofactor.

It is found in the cytoplasm. It carries out the reaction [thioredoxin]-dithiol + NADP(+) = [thioredoxin]-disulfide + NADPH + H(+). The sequence is that of Thioredoxin reductase (cys-9) from Neurospora crassa (strain ATCC 24698 / 74-OR23-1A / CBS 708.71 / DSM 1257 / FGSC 987).